Consider the following 175-residue polypeptide: CDP-archaeol synthase (175 aa).

4 helical membrane passes run 41-61 (GLFSGIFCGFIAGCIEIWLSS), 82-102 (LIVVLALASGALFGDMFKSFF), 122-142 (FVVGAWVFTYLVAPEWFVSNF), and 150-170 (VIIITPLLHLTTNIIGYLIGV).

This sequence belongs to the CDP-archaeol synthase family. Mg(2+) serves as cofactor.

The protein localises to the cell membrane. The catalysed reaction is 2,3-bis-O-(geranylgeranyl)-sn-glycerol 1-phosphate + CTP + H(+) = CDP-2,3-bis-O-(geranylgeranyl)-sn-glycerol + diphosphate. The protein operates within membrane lipid metabolism; glycerophospholipid metabolism. Functionally, catalyzes the formation of CDP-2,3-bis-(O-geranylgeranyl)-sn-glycerol (CDP-archaeol) from 2,3-bis-(O-geranylgeranyl)-sn-glycerol 1-phosphate (DGGGP) and CTP. This reaction is the third ether-bond-formation step in the biosynthesis of archaeal membrane lipids. The chain is CDP-archaeol synthase from Methanosarcina barkeri (strain Fusaro / DSM 804).